The primary structure comprises 547 residues: Ribosome protection protein VmlR (547 aa).

Positions 5 to 200 constitute an ABC transporter 1 domain; sequence VTLTNVSYEV…FREKKRLTQQ (196 aa). Position 37–44 (37–44) interacts with ATP; the sequence is GKNGAGKS. The tract at residues 183 to 289 is antibiotic resistance domain (ARD); the sequence is GNYSGYMKFR…SIDTTHKTGK (107 aa). 2 coiled-coil regions span residues 193–222 and 245–269; these read EKKRLTQQREYEKQQKMVERIEAQMNGLAS and AKRTDAQIKSKQKRLEKELEKAKAE. An ABC transporter 2 domain is found at 292–504; sequence LEVQNVTKAF…REELRLKLET (213 aa). 324-331 contributes to the ATP binding site; sequence GPNGSGKT. Positions 483-547 are C-terminal extension (CTE); the sequence is KQLNDVPSER…KELDHQDKKD (65 aa). The stretch at 488–543 forms a coiled coil; it reads VPSERNEREELRLKLETERQEVLGKLSFMTPNDKGYKELDQAFNELTKRIKELDHQ.

This sequence belongs to the ABC transporter superfamily. ABCF family. ARE2 subfamily. As to quaternary structure, binds within the E-site of the 70S ribosome, where it contacts ribosomal proteins L1, L5, L33-1, S7, S11, the 16 and 23S rRNAs and the acceptor arm of the P-site tRNA.

The protein resides in the cytoplasm. Functionally, recognizes and binds in the vacant E-site of ribosomes stalled by some peptidyltransferase center (PTC)-targeting antibiotics. Makes contact with the PTC and both ribosomal subunits. Induces conformational changes in the P-site, which allows it to dislodge the antibiotic from its PTC binding site. Binds to ribosomes either directly following translation initation or subsequent to E tRNA release during elongation. Involved in resistance to a narrow spectrum of antibiotics (the streptogramin A antibiotic virginiamycin M, the lincosamide antibiotic lincomycin and the pleuromutilin antibiotic tiamulin). The sequence is that of Ribosome protection protein VmlR from Bacillus subtilis (strain 168).